The chain runs to 388 residues: Transcription factor SOX-7 (388 aa).

2 disordered regions span residues 20-46 and 140-197; these read DAELSDGQSPPAVPRPPGDKGSESRIR and RDQN…VDTY. Basic and acidic residues-rich tracts occupy residues 36–45 and 146–164; these read PGDKGSESRI and PEKRSGSRGALGEKEDRGE. Residues 45–113 constitute a DNA-binding region (HMG box); sequence IRRPMNAFMV…QHMQDYPNYK (69 aa). One can recognise a Sox C-terminal domain in the interval 268 to 388; sequence VSMMSPVPGC…ATYYNSYSVS (121 aa).

In terms of assembly, interacts with CTNNB1/beta-catenin; this interaction may lead to the proteasomal degradation of active CTNNB1 and thus inhibition of Wnt/beta-catenin-stimulated transcription. In terms of tissue distribution, widely expressed in adult and fetal tissues. Present both in mesenchymal and epithelial cells in some adult tissues, including colon. Tends to be down-regulated in prostate adenocarcinomas and colorectal tumors due to promoter hypermethylation.

The protein resides in the nucleus. It is found in the cytoplasm. Binds to and activates the CDH5 promoter, hence plays a role in the transcriptional regulation of genes expressed in the hemogenic endothelium and blocks further differentiation into blood precursors. May be required for the survival of both hematopoietic and endothelial precursors during specification. Competes with GATA4 for binding and activation of the FGF3 promoter. Represses Wnt/beta-catenin-stimulated transcription, probably by targeting CTNNB1 to proteasomal degradation. Binds the DNA sequence 5'-AACAAT-3'. This Homo sapiens (Human) protein is Transcription factor SOX-7 (SOX7).